The primary structure comprises 132 residues: ER membrane protein complex subunit 5 (132 aa).

The Cytoplasmic portion of the chain corresponds to 1–3 (MAS). The chain crosses the membrane as a helical span at residues 4–22 (SIWKGLVGIGLFALAHAAF). The Lumenal segment spans residues 23–43 (SAAQHRSYMRLTEKEDETLPI). The chain crosses the membrane as a helical span at residues 44 to 63 (DIVLQTLLAFIVACYGIVHI). Topologically, residues 64–132 (AGEFKDMDAT…KLSKLESMHR (69 aa)) are cytoplasmic.

The protein belongs to the membrane magnesium transporter (TC 1.A.67) family. As to quaternary structure, component of the ER membrane protein complex (EMC).

Its subcellular location is the endoplasmic reticulum membrane. The protein resides in the golgi apparatus membrane. The protein localises to the early endosome membrane. Functionally, part of the endoplasmic reticulum membrane protein complex (EMC) that enables the energy-independent insertion into endoplasmic reticulum membranes of newly synthesized membrane proteins. Preferentially accommodates proteins with transmembrane domains that are weakly hydrophobic or contain destabilizing features such as charged and aromatic residues. Involved in the cotranslational insertion of multi-pass membrane proteins in which stop-transfer membrane-anchor sequences become ER membrane spanning helices. It is also required for the post-translational insertion of tail-anchored/TA proteins in endoplasmic reticulum membranes. By mediating the proper cotranslational insertion of N-terminal transmembrane domains in an N-exo topology, with translocated N-terminus in the lumen of the ER, controls the topology of multi-pass membrane proteins like the G protein-coupled receptors. By regulating the insertion of various proteins in membranes, it is indirectly involved in many cellular processes. May be involved in Mg(2+) transport. This is ER membrane protein complex subunit 5 from Xenopus tropicalis (Western clawed frog).